The sequence spans 199 residues: Pyrrolidone-carboxylate peptidase (199 aa).

Active-site residues include E80, C142, and H166.

It belongs to the peptidase C15 family. In terms of assembly, homotetramer.

It is found in the cytoplasm. It carries out the reaction Release of an N-terminal pyroglutamyl group from a polypeptide, the second amino acid generally not being Pro.. Removes 5-oxoproline from various penultimate amino acid residues except L-proline. In Oceanobacillus iheyensis (strain DSM 14371 / CIP 107618 / JCM 11309 / KCTC 3954 / HTE831), this protein is Pyrrolidone-carboxylate peptidase.